Reading from the N-terminus, the 200-residue chain is Probable GTP-binding protein EngB (200 aa).

The 175-residue stretch at 26–200 (SIPEIAIAGR…IYEIAQCIKK (175 aa)) folds into the EngB-type G domain. GTP-binding positions include 34–41 (GRSNVGKS), 61–65 (GCTKQ), 80–83 (DLPG), 147–150 (TKID), and 176–179 (VISA). Residues serine 41 and threonine 63 each contribute to the Mg(2+) site.

Belongs to the TRAFAC class TrmE-Era-EngA-EngB-Septin-like GTPase superfamily. EngB GTPase family. Mg(2+) serves as cofactor.

Its function is as follows. Necessary for normal cell division and for the maintenance of normal septation. The sequence is that of Probable GTP-binding protein EngB from Ehrlichia canis (strain Jake).